The sequence spans 358 residues: Phosphoserine aminotransferase (358 aa).

Arg41 contacts L-glutamate. Residues 75–76 (AS), Trp100, Thr148, Asp167, and Gln190 contribute to the pyridoxal 5'-phosphate site. N6-(pyridoxal phosphate)lysine is present on Lys191. Residue 233–234 (NT) coordinates pyridoxal 5'-phosphate.

This sequence belongs to the class-V pyridoxal-phosphate-dependent aminotransferase family. SerC subfamily. In terms of assembly, homodimer. Requires pyridoxal 5'-phosphate as cofactor.

Its subcellular location is the cytoplasm. The enzyme catalyses O-phospho-L-serine + 2-oxoglutarate = 3-phosphooxypyruvate + L-glutamate. The catalysed reaction is 4-(phosphooxy)-L-threonine + 2-oxoglutarate = (R)-3-hydroxy-2-oxo-4-phosphooxybutanoate + L-glutamate. The protein operates within amino-acid biosynthesis; L-serine biosynthesis; L-serine from 3-phospho-D-glycerate: step 2/3. It participates in cofactor biosynthesis; pyridoxine 5'-phosphate biosynthesis; pyridoxine 5'-phosphate from D-erythrose 4-phosphate: step 3/5. Its function is as follows. Catalyzes the reversible conversion of 3-phosphohydroxypyruvate to phosphoserine and of 3-hydroxy-2-oxo-4-phosphonooxybutanoate to phosphohydroxythreonine. The chain is Phosphoserine aminotransferase from Campylobacter jejuni subsp. jejuni serotype O:2 (strain ATCC 700819 / NCTC 11168).